The sequence spans 1155 residues: DNA-directed RNA polymerase subunit beta (1155 aa).

This sequence belongs to the RNA polymerase beta chain family. The RNAP catalytic core consists of 2 alpha, 1 beta, 1 beta' and 1 omega subunit. When a sigma factor is associated with the core the holoenzyme is formed, which can initiate transcription.

The enzyme catalyses RNA(n) + a ribonucleoside 5'-triphosphate = RNA(n+1) + diphosphate. In terms of biological role, DNA-dependent RNA polymerase catalyzes the transcription of DNA into RNA using the four ribonucleoside triphosphates as substrates. The protein is DNA-directed RNA polymerase subunit beta of Borreliella afzelii (strain PKo) (Borrelia afzelii).